We begin with the raw amino-acid sequence, 127 residues long: Large ribosomal subunit protein uL18 (127 aa).

This sequence belongs to the universal ribosomal protein uL18 family. Part of the 50S ribosomal subunit; part of the 5S rRNA/L5/L18/L25 subcomplex. Contacts the 5S and 23S rRNAs.

Functionally, this is one of the proteins that bind and probably mediate the attachment of the 5S RNA into the large ribosomal subunit, where it forms part of the central protuberance. In Streptomyces coelicolor (strain ATCC BAA-471 / A3(2) / M145), this protein is Large ribosomal subunit protein uL18.